Consider the following 975-residue polypeptide: Importin-11 (975 aa).

Position 1 is an N-acetylmethionine (methionine 1). The region spanning 28–100 is the Importin N-terminal domain; the sequence is AEEQLKQWET…RAGLITNFNE (73 aa). 14 HEAT repeats span residues 123-160, 283-317, 318-356, 422-459, 473-509, 511-548, 555-593, 600-636, 640-677, 683-720, 731-773, 819-849, 850-887, and 957-974; these read RQWPELIPTLVESVKVQDDLRQHRALLTFYHVTKTLAS, QHPISFTPLIQRSLEFSVSYVFTEVGEGVTFERFI, VQCMNLIKMIVKNYAYKPSKNFEDSSPETLEAHKIKMAF, QTLTPVLLEMMQTLEGPTNVEDMNALLIKDAVYNAVGL, WFKTQLLPELQVSHNRYKPLRRRVIWLIGQWISVKFK, DLRPMLYEAICNLLQDQDLVVRIETATTLKLTVDDFEF, PYLETMFTLLFQLLQQVTECDTKMHVLHVLSCVIERVNV, GCLVQYLPLLWKQSEEHNMLRCAILTTLIHLVQGLGA, NLYPFLLPVIQLSTDVSQPPHVYLLEDGLELWLVTLEN, PELLRIFQNMSPLLELSSENLRTCFKIINGYIFLSSTE, QSFY…ILPC, QEMDQLLGNVIEMWVDRMDNITQPERKKLSA, LALLSLLPSDNSVIQDKFCGIINISVEALHDVMTEDPE, and METVDTEIVTQLQEFLQG. Serine 343 bears the Phosphoserine mark.

The protein belongs to the importin beta family. As to quaternary structure, interacts with UBE2E3 and RPL12.

It is found in the cytoplasm. The protein resides in the nucleus. Its function is as follows. Functions in nuclear protein import as nuclear transport receptor. Serves as receptor for nuclear localization signals (NLS) in cargo substrates. Is thought to mediate docking of the importin/substrate complex to the nuclear pore complex (NPC) through binding to nucleoporin and the complex is subsequently translocated through the pore by an energy requiring, Ran-dependent mechanism. At the nucleoplasmic side of the NPC, Ran binds to the importin, the importin/substrate complex dissociates and importin is re-exported from the nucleus to the cytoplasm where GTP hydrolysis releases Ran. The directionality of nuclear import is thought to be conferred by an asymmetric distribution of the GTP- and GDP-bound forms of Ran between the cytoplasm and nucleus. Mediates the nuclear import of RPL12, and of UBE2E3. In Mus musculus (Mouse), this protein is Importin-11 (Ipo11).